Consider the following 409-residue polypeptide: Elongation factor 1-gamma (409 aa).

Residues 2 to 81 (SVGTVYGKIG…YLASLNKTRA (80 aa)) enclose the GST N-terminal domain. Positions 86–212 (TAEEKAKVLQ…EPLKFIDQPL (127 aa)) constitute a GST C-terminal domain. Over residues 219–248 (NKEAAPAKKAEKKKDEKKKNAPKPQAERPA) the composition is skewed to basic and acidic residues. The tract at residues 219-261 (NKEAAPAKKAEKKKDEKKKNAPKPQAERPAKPPKHPLASAPNG) is disordered. An EF-1-gamma C-terminal domain is found at 251–409 (PKHPLASAPN…REVADGKVCK (159 aa)).

As to quaternary structure, EF-1 is composed of four subunits: alpha, beta, delta, and gamma.

Probably plays a role in anchoring the complex to other cellular components. The sequence is that of Elongation factor 1-gamma (tef3) from Schizosaccharomyces pombe (strain 972 / ATCC 24843) (Fission yeast).